Reading from the N-terminus, the 295-residue chain is Proline-rich proteoglycan 2 (295 aa).

Residues methionine 1–alanine 16 form the signal peptide. A disordered region spans residues alanine 16–alanine 295. Low complexity predominate over residues glutamate 26 to histidine 41. Residues proline 48–proline 58 show a composition bias toward pro residues. Residues glutamate 62–glycine 78 show a composition bias toward acidic residues. Pro residues-rich tracts occupy residues proline 100–glycine 187 and glutamine 194–proline 278.

Post-translationally, contains glycosaminoglycans of chondroitin-sulfate and heparan types.

Its subcellular location is the secreted. In Rattus norvegicus (Rat), this protein is Proline-rich proteoglycan 2 (Prpg2).